Here is a 358-residue protein sequence, read N- to C-terminus: F-box/kelch-repeat protein SKIP4 (358 aa).

The 48-residue stretch at 20–67 folds into the F-box domain; sequence ALISGVPDDISKSCLARVPREYHMAMKCVSRRWRDFVCSDEMCDYRNE. Kelch repeat units lie at residues 78–122, 123–171, 173–219, 220–269, 271–307, and 308–355; these read LCRD…VLGK, RLFV…TLDG, IIAI…VMDG, RIYI…VLDQ, FGAK…SIGN, and SIFV…SCKS.

In terms of assembly, part of a SCF (SKP1-cullin-F-box) protein ligase complex. Interacts with SKP1A/ASK1.

Its pathway is protein modification; protein ubiquitination. This chain is F-box/kelch-repeat protein SKIP4 (SKIP4), found in Arabidopsis thaliana (Mouse-ear cress).